A 325-amino-acid polypeptide reads, in one-letter code: Beta-ketoacyl-[acyl-carrier-protein] synthase III (325 aa).

Catalysis depends on residues Cys119 and His252. Residues 253–257 (QANIR) are ACP-binding. Asn282 is an active-site residue.

The protein belongs to the thiolase-like superfamily. FabH family. As to quaternary structure, homodimer.

The protein localises to the cytoplasm. The enzyme catalyses malonyl-[ACP] + acetyl-CoA + H(+) = 3-oxobutanoyl-[ACP] + CO2 + CoA. It functions in the pathway lipid metabolism; fatty acid biosynthesis. Catalyzes the condensation reaction of fatty acid synthesis by the addition to an acyl acceptor of two carbons from malonyl-ACP. Catalyzes the first condensation reaction which initiates fatty acid synthesis and may therefore play a role in governing the total rate of fatty acid production. Possesses both acetoacetyl-ACP synthase and acetyl transacylase activities. Its substrate specificity determines the biosynthesis of branched-chain and/or straight-chain of fatty acids. This chain is Beta-ketoacyl-[acyl-carrier-protein] synthase III, found in Variovorax paradoxus (strain S110).